The chain runs to 117 residues: UPF0342 protein lwe2240 (117 aa).

It belongs to the UPF0342 family.

The protein is UPF0342 protein lwe2240 of Listeria welshimeri serovar 6b (strain ATCC 35897 / DSM 20650 / CCUG 15529 / CIP 8149 / NCTC 11857 / SLCC 5334 / V8).